Consider the following 209-residue polypeptide: MGCVSMTLGIDEAGRGCLAGSLFVAGVVCNEKIALEFLKMGLKDSKKLSPKKRFFLEDKIKTHGEVGFFVVKKSANEIDHLGLGACLKLAIEEIVENGCSLANEIKIDGNTAFGLNKRYPNIQTIIKGDETIAQIAMASVLAKASKDREMLELHALFKEYGWDKNCGYGTKQHIEAINKLGATPFHRHSFTLKNRILNPKLLEVEQRLV.

The RNase H type-2 domain maps to 5-202 (SMTLGIDEAG…KNRILNPKLL (198 aa)). Residues Asp-11, Glu-12, and Asp-108 each coordinate a divalent metal cation.

Belongs to the RNase HII family. Mn(2+) is required as a cofactor. Requires Mg(2+) as cofactor.

Its subcellular location is the cytoplasm. It carries out the reaction Endonucleolytic cleavage to 5'-phosphomonoester.. Functionally, endonuclease that specifically degrades the RNA of RNA-DNA hybrids. This Helicobacter pylori (strain J99 / ATCC 700824) (Campylobacter pylori J99) protein is Ribonuclease HII (rnhB).